The primary structure comprises 126 residues: Glycine cleavage system H protein (126 aa).

Residues 24 to 105 (TLTVGITDHA…AYGVWLFKIK (82 aa)) enclose the Lipoyl-binding domain. Lys-65 carries the post-translational modification N6-lipoyllysine.

The protein belongs to the GcvH family. The glycine cleavage system is composed of four proteins: P, T, L and H. (R)-lipoate is required as a cofactor.

In terms of biological role, the glycine cleavage system catalyzes the degradation of glycine. The H protein shuttles the methylamine group of glycine from the P protein to the T protein. The chain is Glycine cleavage system H protein from Burkholderia cenocepacia (strain ATCC BAA-245 / DSM 16553 / LMG 16656 / NCTC 13227 / J2315 / CF5610) (Burkholderia cepacia (strain J2315)).